The sequence spans 60 residues: Large ribosomal subunit protein eL37 (60 aa).

Zn(2+) is bound by residues Cys-19, Cys-22, Cys-34, and Cys-37. The C4-type zinc-finger motif lies at 19 to 37; it reads CRRCGSISYHARHKVCSAC.

It belongs to the eukaryotic ribosomal protein eL37 family. The cofactor is Zn(2+).

Its function is as follows. Binds to the 23S rRNA. The sequence is that of Large ribosomal subunit protein eL37 from Methanosphaerula palustris (strain ATCC BAA-1556 / DSM 19958 / E1-9c).